Consider the following 605-residue polypeptide: MADSKGSTSKEGFGDWCILEADCSDVEDDLGQLFERDTDSDISDLLDNCDLDQGNSRELFHQQECKQSEEQLQKLKRKYLSPKAVAQLSPRLESISLSPQQKSKRRLFAEQDSGLELTFNNEAEDVTPEVEVPAIDSRPDDDEGGSGDVDIHYTALLRSSNQKATLLAKFKQAFGVGFNELTRQFKSYKTCCNHWVVSVYAVHDDLFESSKQLLQQHCDYIWVRGIDAMSLYLLCFKAGKNRGTVHKLITTMLNVHEQQILSEPPKLRNTAAALFWYKGCMGPGVFTHGPYPEWIAQLTILGHKSAEASAFDLSVMVQWAFDNNLFEEADIAYGYARLAPEDSNAVAWLAHNNQAKYVRECAMMVRYYKKGQMRDMSMSEWIYTRIHEVEGEGQWSSIVKFLRYQEINFISFLAALKDLLHSVPKRNCILFHGPPNTGKSSFGMSLIKVLRGRVLSFVNSKSQFWLQPLGECKIALLDDVTDPCWVYMDQYLRNGLDGHFVSLDCKYRAPMQTKFPPLILTSNINVHAETNYRYLHSRIKGFEFKNPFPMKADNTPQFELTDQSWKSFFTRLWTHLDLSDQEDEGEHGESQRAFQCSARTANEHL.

A Nuclear localization signal motif is present at residues lysine 76–lysine 78. Phosphoserine; by host occurs at positions 81 and 89. Positions leucine 88 to leucine 97 match the Nuclear export signal motif. The tract at residues glycine 145–alanine 308 is DNA-binding region. The region spanning isoleucine 407–glutamine 557 is the SF3 helicase domain. Glycine 433–serine 440 lines the ATP pocket. Lysine 514 is covalently cross-linked (Glycyl lysine isopeptide (Lys-Gly) (interchain with G-Cter in SUMO)).

This sequence belongs to the papillomaviridae E1 protein family. As to quaternary structure, can form hexamers. Interacts with E2 protein; this interaction increases E1 DNA binding specificity. Interacts with host DNA polymerase subunit POLA2. Interacts with host single stranded DNA-binding protein RPA1. Interacts with host TOP1; this interaction stimulates the enzymatic activity of TOP1. Post-translationally, phosphorylated. Sumoylated.

It is found in the host nucleus. It carries out the reaction Couples ATP hydrolysis with the unwinding of duplex DNA by translocating in the 3'-5' direction.. The catalysed reaction is ATP + H2O = ADP + phosphate + H(+). ATP-dependent DNA 3'-5' helicase required for initiation of viral DNA replication. It forms a complex with the viral E2 protein. The E1-E2 complex binds to the replication origin which contains binding sites for both proteins. During the initial step, a dimer of E1 interacts with a dimer of protein E2 leading to a complex that binds the viral origin of replication with high specificity. Then, a second dimer of E1 displaces the E2 dimer in an ATP-dependent manner to form the E1 tetramer. Following this, two E1 monomers are added to each half of the site, which results in the formation of two E1 trimers on the viral ori. Subsequently, two hexamers will be created. The double hexamer acts as a bi-directional helicase machinery and unwinds the viral DNA and then recruits the host DNA polymerase to start replication. The sequence is that of Replication protein E1 from Human papillomavirus 47.